Here is a 123-residue protein sequence, read N- to C-terminus: Galanin peptides (123 aa).

Positions 1–19 (MPRGSVLLLASLLLAAALS) are cleaved as a signal peptide. The propeptide occupies 20–30 (ATLGLGSPVKE). The span at 53–66 (SFQDKHGLAGKREL) shows a compositional bias: basic and acidic residues. Positions 53–79 (SFQDKHGLAGKRELEPEDEARPGSFDR) are disordered. Residue Ala61 is modified to Alanine amide. Ser116 carries the post-translational modification Phosphoserine.

It belongs to the galanin family.

The protein resides in the secreted. Its function is as follows. Endocrine hormone of the central and peripheral nervous systems that binds and activates the G protein-coupled receptors GALR1, GALR2, and GALR3. This small neuropeptide may regulate diverse physiologic functions including contraction of smooth muscle of the gastrointestinal and genitourinary tract, growth hormone and insulin release and adrenal secretion. The chain is Galanin peptides (GAL) from Bos taurus (Bovine).